Here is a 418-residue protein sequence, read N- to C-terminus: UPF0261 protein BRA1168/BS1330_II1159 (418 aa).

It belongs to the UPF0261 family.

The chain is UPF0261 protein BRA1168/BS1330_II1159 from Brucella suis biovar 1 (strain 1330).